The following is a 499-amino-acid chain: Dual specificity protein kinase CLK2 (499 aa).

Positions 1–65 are disordered; sequence MPHPRRYHSS…RSSYDDHSSD (65 aa). Residues 8 to 23 show a composition bias toward basic and acidic residues; that stretch reads HSSERGSRGSYHEHYQ. Positions 24–33 are enriched in basic residues; sequence SRKHKRRRSR. At S34 the chain carries Phosphoserine; by PKB/AKT1. Over residues 47–65 the composition is skewed to basic and acidic residues; that stretch reads REDSYHVRSRSSYDDHSSD. S98 bears the Phosphoserine; by autocatalysis mark. Y99 is subject to Phosphotyrosine; by autocatalysis. The tract at residues 102 to 142 is disordered; that stretch reads HRENSSYRSQRSSRRKHRRRRRRSRTFSRSSSHSSRRAKSV. Residues 112-127 are compositionally biased toward basic residues; sequence RSSRRKHRRRRRRSRT. T127 is modified (phosphothreonine; by PKB/AKT1). S141 is modified (phosphoserine; by autocatalysis). Position 152 is a phosphotyrosine (Y152). A Protein kinase domain is found at 163–479; the sequence is EIVSTLGEGT…GEALQHPFFA (317 aa). ATP contacts are provided by residues 168-176 and K192; that span reads LGEGTFGRV. D289 (proton acceptor) is an active-site residue. Phosphothreonine; by PKB/AKT2 is present on T343.

The protein belongs to the protein kinase superfamily. CMGC Ser/Thr protein kinase family. Lammer subfamily. In terms of assembly, interacts with RBMX and UBL5. Interacts with AKT1. Autophosphorylates on all three types of residues. Phosphorylation on Ser-34 and Thr-127 by AKT1 is induced by ionizing radiation or insulin. Phosphorylation plays a critical role in cell proliferation following low dose radiation and prevents cell death following high dose radiation. Phosphorylation at Thr-343 by PKB/AKT2 induces its kinase activity which is required for its stability. The phosphorylation status at Ser-141 influences its subnuclear localization; inhibition of phosphorylation at Ser-141 results in accumulation in the nuclear speckle.

Its subcellular location is the nucleus. It is found in the nucleus speckle. The enzyme catalyses L-seryl-[protein] + ATP = O-phospho-L-seryl-[protein] + ADP + H(+). The catalysed reaction is L-threonyl-[protein] + ATP = O-phospho-L-threonyl-[protein] + ADP + H(+). It carries out the reaction L-tyrosyl-[protein] + ATP = O-phospho-L-tyrosyl-[protein] + ADP + H(+). With respect to regulation, 5,6-dichloro-1-b-D-ribofuranosylbenzimidazole (DRB) inhibits autophosphorylation. TG003 inhibits its kinase activity and affects the regulation of alternative splicing mediated by phosphorylation of SR proteins. Dual specificity kinase acting on both serine/threonine and tyrosine-containing substrates. Phosphorylates serine- and arginine-rich (SR) proteins of the spliceosomal complex. May be a constituent of a network of regulatory mechanisms that enable SR proteins to control RNA splicing and can cause redistribution of SR proteins from speckles to a diffuse nucleoplasmic distribution. Acts as a suppressor of hepatic gluconeogenesis and glucose output by repressing PPARGC1A transcriptional activity on gluconeogenic genes via its phosphorylation. Phosphorylates PPP2R5B thereby stimulating the assembly of PP2A phosphatase with the PPP2R5B-AKT1 complex leading to dephosphorylation of AKT1. Phosphorylates: PTPN1, SRSF1 and SRSF3. Regulates the alternative splicing of tissue factor (F3) pre-mRNA in endothelial cells. Phosphorylates PAGE4 at several serine and threonine residues and this phosphorylation attenuates the ability of PAGE4 to potentiate the transcriptional activator activity of JUN. The protein is Dual specificity protein kinase CLK2 (Clk2) of Mus musculus (Mouse).